We begin with the raw amino-acid sequence, 409 residues long: Elongation factor Tu (409 aa).

In terms of domain architecture, tr-type G spans lysine 10–glutamate 214. The interval glycine 19–threonine 26 is G1. Residue glycine 19–threonine 26 coordinates GTP. Mg(2+) is bound at residue threonine 26. The G2 stretch occupies residues glycine 60–asparagine 64. Residues aspartate 81–glycine 84 are G3. GTP is bound by residues aspartate 81–histidine 85 and asparagine 136–aspartate 139. Residues asparagine 136 to aspartate 139 are G4. Positions serine 174–leucine 176 are G5.

Belongs to the TRAFAC class translation factor GTPase superfamily. Classic translation factor GTPase family. EF-Tu/EF-1A subfamily. Monomer.

The protein localises to the cytoplasm. The enzyme catalyses GTP + H2O = GDP + phosphate + H(+). Functionally, GTP hydrolase that promotes the GTP-dependent binding of aminoacyl-tRNA to the A-site of ribosomes during protein biosynthesis. The chain is Elongation factor Tu from Synechococcus sp. (strain JA-2-3B'a(2-13)) (Cyanobacteria bacterium Yellowstone B-Prime).